Consider the following 158-residue polypeptide: 6,7-dimethyl-8-ribityllumazine synthase (158 aa).

5-amino-6-(D-ribitylamino)uracil-binding positions include F23, 61–63 (SME), and 85–87 (AVI). 90–91 (DT) contributes to the (2S)-2-hydroxy-3-oxobutyl phosphate binding site. H93 functions as the Proton donor in the catalytic mechanism. Residue Y118 coordinates 5-amino-6-(D-ribitylamino)uracil. R132 provides a ligand contact to (2S)-2-hydroxy-3-oxobutyl phosphate.

This sequence belongs to the DMRL synthase family.

It carries out the reaction (2S)-2-hydroxy-3-oxobutyl phosphate + 5-amino-6-(D-ribitylamino)uracil = 6,7-dimethyl-8-(1-D-ribityl)lumazine + phosphate + 2 H2O + H(+). It functions in the pathway cofactor biosynthesis; riboflavin biosynthesis; riboflavin from 2-hydroxy-3-oxobutyl phosphate and 5-amino-6-(D-ribitylamino)uracil: step 1/2. Functionally, catalyzes the formation of 6,7-dimethyl-8-ribityllumazine by condensation of 5-amino-6-(D-ribitylamino)uracil with 3,4-dihydroxy-2-butanone 4-phosphate. This is the penultimate step in the biosynthesis of riboflavin. This Prochlorococcus marinus (strain MIT 9211) protein is 6,7-dimethyl-8-ribityllumazine synthase.